The chain runs to 182 residues: MTTASPSQVRQNYHQDAEAAINRQINLELYASYVYLSMSCYFDRDDVALKNFAKYFLHQSHEEREHAEKLMKLQNQRGGRIFLQDIKKPDRDDWESGLNAMECALHLEKSVNQSLLELHKLATDKNDPHLCDFIETYYLSEQVKSIKELGDHVTNLRKMGAPEAGMAEYLFDKHTLGHGDES.

Position 1 is an N-acetylmethionine (Met1). Residue Thr2 is modified to N-acetylthreonine; in Ferritin heavy chain, N-terminally processed. The Ferritin-like diiron domain occupies 11 to 160 (QNYHQDAEAA…DHVTNLRKMG (150 aa)). Positions 28, 63, 66, 108, and 142 each coordinate Fe cation.

Belongs to the ferritin family. In terms of assembly, oligomer of 24 subunits. There are two types of subunits: L (light) chain and H (heavy) chain. The major chain can be light or heavy, depending on the species and tissue type. The functional molecule forms a roughly spherical shell with a diameter of 12 nm and contains a central cavity into which the insoluble mineral iron core is deposited. Interacts with NCOA4; NCOA4 promotes targeting of the iron-binding ferritin complex to autolysosomes following starvation or iron depletion.

Its subcellular location is the cytoplasm. It localises to the cytoplasmic vesicle. The protein resides in the autophagosome. The protein localises to the autolysosome. The enzyme catalyses 4 Fe(2+) + O2 + 4 H(+) = 4 Fe(3+) + 2 H2O. Functionally, stores iron in a soluble, non-toxic, readily available form. Important for iron homeostasis. Has ferroxidase activity. Iron is taken up in the ferrous form and deposited as ferric hydroxides after oxidation. Also plays a role in delivery of iron to cells. Mediates iron uptake in capsule cells of the developing kidney. Degraded to release iron upon autophagy activation by nutrient starvation. The chain is Ferritin heavy chain (Fth1) from Mus musculus (Mouse).